The primary structure comprises 1118 residues: Ubiquitin carboxyl-terminal hydrolase 8 (1118 aa).

The region spanning 33–116 (TKSYVHSALK…ESLKLRYEEA (84 aa)) is the MIT domain. Composition is skewed to basic and acidic residues over residues 120–146 (KKLE…REDG) and 158–177 (LDSK…KCET). The disordered stretch occupies residues 120–177 (KKLEEKDRQEEAQRLQQKRQETGREDGGTLAKGSLENVLDSKDKTQKSNGEKNEKCET). Ser-160 bears the Phosphoserine mark. In terms of domain architecture, Rhodanese spans 195-313 (KNISLIIMDA…WLLCYPQYTT (119 aa)). Ser-392 and Ser-400 each carry phosphoserine. The disordered stretch occupies residues 402-447 (KNVPQIDRTKKPAVKLPEEHRIKSESTNHEQQSPQSGKVIPDRSTK). The SH3-binding signature appears at 405–413 (PQIDRTKKP). Positions 417-429 (LPEEHRIKSESTN) are enriched in basic and acidic residues. Residue Ser-452 is modified to Phosphoserine. Residues 475-573 (KNKQEKELRE…AKKSVEDRGK (99 aa)) show a composition bias toward basic and acidic residues. Disordered stretches follow at residues 475–648 (KNKQ…GRIV) and 679–746 (YPPE…ENKP). The residue at position 577 (Thr-577) is a Phosphothreonine. Residues 618 to 645 (TFREDTDDTERNKAQREPLTRARSEEMG) show a composition bias toward basic and acidic residues. Residues 716 to 726 (SYSSPDITQAI) are compositionally biased toward polar residues. Phosphoserine occurs at positions 718 and 719. The 333-residue stretch at 777-1109 (TGLRNLGNTC…AAYILFYTSL (333 aa)) folds into the USP domain. Cys-786 acts as the Nucleophile in catalysis. At Thr-945 the chain carries Phosphothreonine. The active-site Proton acceptor is His-1067.

This sequence belongs to the peptidase C19 family. Forms a ternary complex with RNF128 and OTUB1. Interacts (via C-terminal UCH catalytic domain) with OTUB1 isoform 1. Interacts with STAM2 (via SH3 domain). Interacts with DNAJB3, EGFR, EPS15, RASGRF1, RNF41, YWHAE, YWHAG and YWHAZ. Interacts with NBR1, RASGRF1, RNF41 and IST1. Associates with the ESCRT-0 complex and with microtubules. Interacts with BIRC6/bruce and KIF23/MKLP1. In terms of assembly, (Microbial infection) Interacts with Zika virus non-structural protein 1. Phosphorylation of Ser-718 is essential for interaction with YWHAE and for cytosol localization. Undergoes dephosphorylation at Ser-718 in the M phase. Tyrosine-phosphorylated in its N-terminal half in an EGFR-dependent manner. In terms of processing, ubiquitinated. Inactive form is mostly monoubiquitinated, but polyubiquitination happens too. Ubiquitination is increased in EGF-stimulated cells. Ubiquitination of active form is undetectable, suggesting a possibility that USP8 deubiquitinates itself, thereby regulating its own function.

The protein localises to the cytoplasm. Its subcellular location is the nucleus. It is found in the endosome membrane. The protein resides in the cell membrane. It carries out the reaction Thiol-dependent hydrolysis of ester, thioester, amide, peptide and isopeptide bonds formed by the C-terminal Gly of ubiquitin (a 76-residue protein attached to proteins as an intracellular targeting signal).. Its function is as follows. Hydrolase that can remove conjugated ubiquitin from proteins and therefore plays an important regulatory role at the level of protein turnover by preventing degradation. Converts both 'Lys-48' an 'Lys-63'-linked ubiquitin chains. Catalytic activity is enhanced in the M phase. Involved in cell proliferation. Required to enter into S phase in response to serum stimulation. May regulate T-cell anergy mediated by RNF128 via the formation of a complex containing RNF128 and OTUB1. Probably regulates the stability of STAM2 and RASGRF1. Regulates endosomal ubiquitin dynamics, cargo sorting, membrane traffic at early endosomes, and maintenance of ESCRT-0 stability. The level of protein ubiquitination on endosomes is essential for maintaining the morphology of the organelle. Deubiquitinates EPS15 and controls tyrosine kinase stability. Removes conjugated ubiquitin from EGFR thus regulating EGFR degradation and downstream MAPK signaling. Involved in acrosome biogenesis through interaction with the spermatid ESCRT-0 complex and microtubules. Deubiquitinates BIRC6/bruce and KIF23/MKLP1. Deubiquitinates BACE1 which inhibits BACE1 lysosomal degradation and modulates BACE-mediated APP cleavage and amyloid-beta formation. This is Ubiquitin carboxyl-terminal hydrolase 8 from Homo sapiens (Human).